Here is a 184-residue protein sequence, read N- to C-terminus: GTP cyclohydrolase 1 (184 aa).

Cysteine 75, histidine 78, and cysteine 146 together coordinate Zn(2+).

This sequence belongs to the GTP cyclohydrolase I family. In terms of assembly, toroid-shaped homodecamer, composed of two pentamers of five dimers.

The enzyme catalyses GTP + H2O = 7,8-dihydroneopterin 3'-triphosphate + formate + H(+). The protein operates within cofactor biosynthesis; 7,8-dihydroneopterin triphosphate biosynthesis; 7,8-dihydroneopterin triphosphate from GTP: step 1/1. The sequence is that of GTP cyclohydrolase 1 from Pseudoalteromonas atlantica (strain T6c / ATCC BAA-1087).